Reading from the N-terminus, the 97-residue chain is Defective intron-associated endonuclease 3 (97 aa).

Its function is as follows. This endonuclease is specific to the nrdB gene splice junction and is involved in intron homing. The sequence is that of Defective intron-associated endonuclease 3 (ITEVIIIR) from Escherichia coli (Bacteriophage T4).